The sequence spans 437 residues: Aspartate--tRNA(Asp/Asn) ligase (437 aa).

An L-aspartate-binding site is contributed by glutamate 175. The tract at residues 197 to 200 is aspartate; sequence QLYK. Arginine 219 provides a ligand contact to L-aspartate. ATP is bound by residues 219–221, 227–229, and glutamate 360; these read RAE and RHL. Positions 360 and 363 each coordinate Mg(2+). L-aspartate contacts are provided by serine 363 and arginine 367. 408–411 contributes to the ATP binding site; that stretch reads GAER.

Belongs to the class-II aminoacyl-tRNA synthetase family. Type 2 subfamily. Homodimer. Mg(2+) serves as cofactor.

It is found in the cytoplasm. The catalysed reaction is tRNA(Asx) + L-aspartate + ATP = L-aspartyl-tRNA(Asx) + AMP + diphosphate. Aspartyl-tRNA synthetase with relaxed tRNA specificity since it is able to aspartylate not only its cognate tRNA(Asp) but also tRNA(Asn). Reaction proceeds in two steps: L-aspartate is first activated by ATP to form Asp-AMP and then transferred to the acceptor end of tRNA(Asp/Asn). This is Aspartate--tRNA(Asp/Asn) ligase from Methanothermobacter thermautotrophicus (strain ATCC 29096 / DSM 1053 / JCM 10044 / NBRC 100330 / Delta H) (Methanobacterium thermoautotrophicum).